The sequence spans 298 residues: MGGASSPRIPSRRSAPYFTSLAFFGSSYIKVKNNRNKMLNPTDAASVALSFSVPFQMSGENPLSKLVEHCNKFVPGADIKMKAEPAKPESLLLPTDMNAYSPYLATPNWWVDQTGWPQLYPTVTTASSVDVYQNYLASSQLGGLLSSSVSAVASQLPAGINAQSALNITSQQRTIAKSFQHTKPMASSSSIPSVLTASNSSANSLVSSGSESVSARGTSGSGGTGKYPSSRTANKCECPNCHEIEKFGPNAIAARKRGVHNCHIAGCGKVYNKSSHLKAHLRWHSGERQMKKRSGDSS.

Residues 206 to 218 (VSSGSESVSARGT) show a composition bias toward low complexity. Residues 206–233 (VSSGSESVSARGTSGSGGTGKYPSSRTA) are disordered. The C2H2-type zinc finger occupies 260–284 (HNCHIAGCGKVYNKSSHLKAHLRWH).

Belongs to the Sp1 C2H2-type zinc-finger protein family. Expressed in ASJ sensory neurons, pharyngeal cells, rectal cells, intestine, seam cells, and vulval cells.

Probable transcription factor which modulates gene expression, thereby acting as an ASJ sensory neuron terminal selector gene. In Caenorhabditis elegans, this protein is Specificity protein transcription factor 1.